We begin with the raw amino-acid sequence, 429 residues long: Melanoma-associated antigen 11 (429 aa).

2 disordered regions span residues 1–30 and 188–215; these read METQFRRGGLGCSPASIKRKKKREDSGDFG and IFGSLSDEGSGSQEKEGPSTSPDLIDPE. Polar residues predominate over residues 194-209; the sequence is DEGSGSQEKEGPSTSP. An MAGE domain is found at 222 to 421; sequence LHDKIIDLVH…TSYPSLYEDA (200 aa).

Expressed in tumors of several types, such as melanoma, head and neck squamous cell carcinoma, lung carcinoma and breast carcinoma. Expressed in testis, ovary, prostate, cancerous prostate, breast and adrenal tissue.

It is found in the nucleus. The protein localises to the cytoplasm. Acts as androgen receptor coregulator that increases androgen receptor activity by modulating the receptors interdomain interaction. May play a role in embryonal development and tumor transformation or aspects of tumor progression. The protein is Melanoma-associated antigen 11 of Homo sapiens (Human).